Consider the following 893-residue polypeptide: TBC domain-containing protein kinase-like protein (893 aa).

Residues M1–S274 enclose the Protein kinase domain. A Rab-GAP TBC domain is found at D466–N651. One can recognise a Rhodanese domain in the interval S790 to P889.

Belongs to the protein kinase superfamily. Component of the FERRY complex.

It localises to the cytoplasm. The protein resides in the cytoskeleton. It is found in the spindle. The protein localises to the midbody. Its subcellular location is the early endosome. Functionally, component of the FERRY complex (Five-subunit Endosomal Rab5 and RNA/ribosome intermediary). The FERRY complex directly interacts with mRNAs and RAB5A, and functions as a RAB5A effector involved in the localization and the distribution of specific mRNAs most likely by mediating their endosomal transport. The complex recruits mRNAs and ribosomes to early endosomes through direct mRNA-interaction. Also involved in the modulation of mTOR signaling and expression of mTOR complex components. Involved in the control of actin-cytoskeleton organization. The sequence is that of TBC domain-containing protein kinase-like protein from Gallus gallus (Chicken).